The following is a 123-amino-acid chain: N(4)-acetylcytidine amidohydrolase (123 aa).

The region spanning 6–101 (ITFYQRFEAD…EIIFWVIQFS (96 aa)) is the ASCH domain. The active-site Proton acceptor is Lys-21. Residue Ser-24 is the Nucleophile of the active site. Catalysis depends on Glu-74, which acts as the Proton donor.

This sequence belongs to the N(4)-acetylcytidine amidohydrolase family.

It catalyses the reaction N(4)-acetylcytidine + H2O = cytidine + acetate + H(+). The enzyme catalyses N(4)-acetyl-2'-deoxycytidine + H2O = 2'-deoxycytidine + acetate + H(+). The catalysed reaction is N(4)-acetylcytosine + H2O = cytosine + acetate + H(+). Its function is as follows. Catalyzes the hydrolysis of N(4)-acetylcytidine (ac4C). In Haemophilus influenzae (strain ATCC 51907 / DSM 11121 / KW20 / Rd), this protein is N(4)-acetylcytidine amidohydrolase.